Reading from the N-terminus, the 372-residue chain is Queuine tRNA-ribosyltransferase (372 aa).

The active-site Proton acceptor is aspartate 92. Residues aspartate 92–tyrosine 96, aspartate 146, glutamine 188, and glycine 215 contribute to the substrate site. Residues glycine 246–glutamate 252 are RNA binding. The active-site Nucleophile is the aspartate 265. The segment at threonine 270–arginine 274 is RNA binding; important for wobble base 34 recognition. Residues cysteine 303, cysteine 305, cysteine 308, and histidine 334 each coordinate Zn(2+).

It belongs to the queuine tRNA-ribosyltransferase family. As to quaternary structure, homodimer. Within each dimer, one monomer is responsible for RNA recognition and catalysis, while the other monomer binds to the replacement base PreQ1. It depends on Zn(2+) as a cofactor.

It carries out the reaction 7-aminomethyl-7-carbaguanine + guanosine(34) in tRNA = 7-aminomethyl-7-carbaguanosine(34) in tRNA + guanine. It functions in the pathway tRNA modification; tRNA-queuosine biosynthesis. In terms of biological role, catalyzes the base-exchange of a guanine (G) residue with the queuine precursor 7-aminomethyl-7-deazaguanine (PreQ1) at position 34 (anticodon wobble position) in tRNAs with GU(N) anticodons (tRNA-Asp, -Asn, -His and -Tyr). Catalysis occurs through a double-displacement mechanism. The nucleophile active site attacks the C1' of nucleotide 34 to detach the guanine base from the RNA, forming a covalent enzyme-RNA intermediate. The proton acceptor active site deprotonates the incoming PreQ1, allowing a nucleophilic attack on the C1' of the ribose to form the product. After dissociation, two additional enzymatic reactions on the tRNA convert PreQ1 to queuine (Q), resulting in the hypermodified nucleoside queuosine (7-(((4,5-cis-dihydroxy-2-cyclopenten-1-yl)amino)methyl)-7-deazaguanosine). The chain is Queuine tRNA-ribosyltransferase from Prochlorococcus marinus (strain AS9601).